The primary structure comprises 125 residues: Large ribosomal subunit protein bL12 (125 aa).

The protein belongs to the bacterial ribosomal protein bL12 family. Homodimer. Part of the ribosomal stalk of the 50S ribosomal subunit. Forms a multimeric L10(L12)X complex, where L10 forms an elongated spine to which 2 to 4 L12 dimers bind in a sequential fashion. Binds GTP-bound translation factors.

Functionally, forms part of the ribosomal stalk which helps the ribosome interact with GTP-bound translation factors. Is thus essential for accurate translation. The chain is Large ribosomal subunit protein bL12 from Delftia acidovorans (strain DSM 14801 / SPH-1).